Consider the following 490-residue polypeptide: Lysine--tRNA ligase (490 aa).

Mg(2+) contacts are provided by E400 and E407.

Belongs to the class-II aminoacyl-tRNA synthetase family. Homodimer. It depends on Mg(2+) as a cofactor.

It is found in the cytoplasm. It catalyses the reaction tRNA(Lys) + L-lysine + ATP = L-lysyl-tRNA(Lys) + AMP + diphosphate. This is Lysine--tRNA ligase (lysS) from Mycoplasma genitalium (strain ATCC 33530 / DSM 19775 / NCTC 10195 / G37) (Mycoplasmoides genitalium).